The primary structure comprises 642 residues: Sodium- and chloride-dependent neutral and basic amino acid transporter B(0+) (642 aa).

The Cytoplasmic portion of the chain corresponds to 1-44; that stretch reads MDKLKCPSFFKCREKEKVSASSENFHVGENDENQDRGNWSKKSD. Helical transmembrane passes span 45 to 65, 72 to 92, and 110 to 130; these read YLLSMIGYAVGLGNVWRFPYL, GAFLIPYAIMLALAGLPLFFL, and ILPLFQGVGITMVLISIFVTI. The Extracellular segment spans residues 131–234; the sequence is YYNVIIAYSL…RSSGMNETGV (104 aa). 7 N-linked (GlcNAc...) asparagine glycosylation sites follow: asparagine 155, asparagine 163, asparagine 174, asparagine 189, asparagine 197, asparagine 202, and asparagine 230. Transmembrane regions (helical) follow at residues 235-255 and 261-281; these read IVWYLALCLLLAWLIVGAALF and SGKVVYFTALFPYVVLLILLV. Residue asparagine 302 is glycosylated (N-linked (GlcNAc...) asparagine). 7 consecutive transmembrane segments (helical) span residues 315–335, 348–368, 399–419, 450–477, 480–500, 528–548, and 563–583; these read AATQIFYSLSVAWGGLVALSS, IVVCLTNCLTSVFAGFAIFSI, LAQLPGGPFWSILFFFMLLTL, ITLGCCLVLFLLGLVCVTQAGIYWVHLI, FCAGWGILIAAILELVGIIWI, CWFVITPILLIAIFIWSLVQF, and VALGWCMIVFCIIWIPIMAII. Topologically, residues 584–642 are cytoplasmic; sequence KIIQAKGNIFQRLISCCRPASNWGPYLEQHRGERYKDMVDPKKEADHEIPTVSGSRKPE. The segment covering 622–632 has biased composition (basic and acidic residues); sequence VDPKKEADHEI. A disordered region spans residues 622–642; sequence VDPKKEADHEIPTVSGSRKPE.

The protein belongs to the sodium:neurotransmitter symporter (SNF) (TC 2.A.22) family. SLC6A14 subfamily. Levels are highest in adult and fetal lung, in trachea and salivary gland. Lower levels detected in mammary gland, stomach and pituitary gland, and very low levels in colon, uterus, prostate and testis.

It localises to the membrane. The protein resides in the apical cell membrane. The enzyme catalyses glycine(out) + chloride(out) + 2 Na(+)(out) = glycine(in) + chloride(in) + 2 Na(+)(in). It carries out the reaction L-leucine(out) + chloride(out) + 2 Na(+)(out) = L-leucine(in) + chloride(in) + 2 Na(+)(in). It catalyses the reaction L-glutamine(out) + chloride(out) + 2 Na(+)(out) = L-glutamine(in) + chloride(in) + 2 Na(+)(in). The catalysed reaction is L-arginine(out) + chloride(out) + 2 Na(+)(out) = L-arginine(in) + chloride(in) + 2 Na(+)(in). The enzyme catalyses (R)-carnitine(out) + chloride(out) + 2 Na(+)(out) = (R)-carnitine(in) + chloride(in) + 2 Na(+)(in). It carries out the reaction O-butanoyl-(R)-carnitine(out) + chloride(out) + 2 Na(+)(out) = O-butanoyl-(R)-carnitine(in) + chloride(in) + 2 Na(+)(in). It catalyses the reaction O-propanoyl-(R)-carnitine(out) + chloride(out) + 2 Na(+)(out) = O-propanoyl-(R)-carnitine(in) + chloride(in) + 2 Na(+)(in). The catalysed reaction is L-isoleucine(out) + chloride(out) + 2 Na(+)(out) = L-isoleucine(in) + chloride(in) + 2 Na(+)(in). The enzyme catalyses L-methionine(out) + chloride(out) + 2 Na(+)(out) = L-methionine(in) + chloride(in) + 2 Na(+)(in). It carries out the reaction L-valine(out) + chloride(out) + 2 Na(+)(out) = L-valine(in) + chloride(in) + 2 Na(+)(in). It catalyses the reaction L-alanine(out) + chloride(out) + 2 Na(+)(out) = L-alanine(in) + chloride(in) + 2 Na(+)(in). The catalysed reaction is L-serine(out) + chloride(out) + 2 Na(+)(out) = L-serine(in) + chloride(in) + 2 Na(+)(in). The enzyme catalyses L-cysteine(out) + chloride(out) + 2 Na(+)(out) = L-cysteine(in) + chloride(in) + 2 Na(+)(in). It carries out the reaction L-asparagine(out) + chloride(out) + 2 Na(+)(out) = L-asparagine(in) + chloride(in) + 2 Na(+)(in). It catalyses the reaction L-threonine(out) + chloride(out) + 2 Na(+)(out) = L-threonine(in) + chloride(in) + 2 Na(+)(in). The catalysed reaction is L-phenylalanine(out) + chloride(out) + 2 Na(+)(out) = L-phenylalanine(in) + chloride(in) + 2 Na(+)(in). The enzyme catalyses L-tryptophan(out) + chloride(out) + 2 Na(+)(out) = L-tryptophan(in) + chloride(in) + 2 Na(+)(in). It carries out the reaction L-tyrosine(out) + chloride(out) + 2 Na(+)(out) = L-tyrosine(in) + chloride(in) + 2 Na(+)(in). It catalyses the reaction L-histidine(out) + chloride(out) + 2 Na(+)(out) = L-histidine(in) + chloride(in) + 2 Na(+)(in). The catalysed reaction is L-lysine(out) + chloride(out) + 2 Na(+)(out) = L-lysine(in) + chloride(in) + 2 Na(+)(in). The enzyme catalyses beta-alanine(out) + chloride(out) + 2 Na(+)(out) = beta-alanine(in) + chloride(in) + 2 Na(+)(in). Amino acid transporter that plays an important role in the absorption of amino acids in the intestinal tract. Mediates the uptake of a broad range of neutral and cationic amino acids (with the exception of proline) in a Na(+)/Cl(-)-dependent manner. Transports non-alpha-amino acids such as beta-alanine with low affinity, and has a higher affinity for dipolar and cationic amino acids such as leucine and lysine. Can also transport carnitine, butirylcarnitine and propionylcarnitine coupled to the transmembrane gradients of Na(+) and Cl(-). In Homo sapiens (Human), this protein is Sodium- and chloride-dependent neutral and basic amino acid transporter B(0+).